The chain runs to 593 residues: Translocon at the outer membrane of chloroplasts 64 (593 aa).

Topologically, residues 1-4 are chloroplast intermembrane; that stretch reads MKSM. Residues 5-25 form a helical membrane-spanning segment; sequence ASPSSQIWVILGLGLAGIYVL. At 26 to 144 the chain is on the cytoplasmic side; the sequence is TRKLTQAVKE…NPAVPNRVPG (119 aa). A helical transmembrane segment spans residues 145–165; the sequence is GSSSGAAVAVAANFVDFSLGV. Over 166–403 the chain is Chloroplast intermembrane; sequence DTSGGVRVPA…LSHDYQSRAL (238 aa). A helical membrane pass occupies residues 404 to 424; sequence SLLSIASISGCCQVTVPLGFF. The Cytoplasmic portion of the chain corresponds to 425–593; sequence DKNPVSVSLI…SAERLRKLFQ (169 aa). 3 TPR repeats span residues 477–510, 511–544, and 545–578; these read AEIS…CGNN, ATYY…DKKN, and VKAY…EPTN.

As to quaternary structure, part of the Toc complex and of the intermembrane space complex. Interacts with TOC12, TIC22 and with the cytosolic domain of TOC34 in a GTP dependent manner. Interacts (via TPR region) with HSP90 and with HSP70 with low efficiency.

Its subcellular location is the plastid. The protein resides in the chloroplast outer membrane. Functionally, chaperone receptor mediating Hsp90-dependent protein targeting to chloroplasts. Bi-functional preprotein receptor acting on both sides of the membrane. This chain is Translocon at the outer membrane of chloroplasts 64 (TOC64), found in Pisum sativum (Garden pea).